The sequence spans 336 residues: Abasic site processing protein HMCES (336 aa).

Cys-2 functions as the Nucleophile in the catalytic mechanism. Cys-2 carries the post-translational modification Thiazolidine linkage to a ring-opened DNA abasic site. Residues 26–51 (RQKCPKWRDGDTDKYQPSYNKSPQSN) are disordered. Over residues 40–51 (YQPSYNKSPQSN) the composition is skewed to polar residues. Residue Glu-129 is part of the active site. Residues 285-336 (QNKSPKKEESRSIIQSPKLSQFGAPPKKTSAGLMQQWLKKEDGEPSPKRAKK) are disordered. Positions 322–336 (LKKEDGEPSPKRAKK) are enriched in basic and acidic residues.

Belongs to the SOS response-associated peptidase family. In terms of processing, ubiquitination of the hmces DNA-protein cross-link by rfwd3 may promotes its degradation.

It is found in the chromosome. Its activity is regulated as follows. Formation and reversal of DNA-protein cross-link depends on DNA context. Catalyzes formation of the thiazolidine linkage in presence of abasic sites in single-stranded DNA. Mediates the reversal of the thiazolidine cross-link in presence of double stranded DNA. Its function is as follows. Sensor of abasic sites in single-stranded DNA (ssDNA) required to preserve genome integrity by promoting error-free repair of abasic sites. Acts as an enzyme that recognizes and binds abasic sites in ssDNA at replication forks and chemically modifies the lesion by forming a covalent cross-link with DNA: forms a stable thiazolidine linkage between a ring-opened abasic site and the alpha-amino and sulfhydryl substituents of its N-terminal catalytic cysteine residue. The hmces DNA-protein cross-link is then either reversed or degraded. Hmces is able to catalyze the reversal of its thiazolidine cross-link and cycle between a cross-link and a non-cross-linked state depending on DNA context: mediates self-reversal of the thiazolidine cross-link in double stranded DNA, allowing apex1 to initiate downstream repair of abasic sites. The hmces DNA-protein cross-link can also be degraded by the sprtn metalloprotease following unfolding by the brip1/fancj helicase. Promotes error-free repair of abasic sites by protecting abasic sites from translesion synthesis (TLS) polymerases and endonucleases that are error-prone and would generate mutations and double-strand breaks. Acts as a protease: mediates autocatalytic processing of its N-terminal methionine in order to expose the catalytic cysteine. The HMCES DNA-protein cross-link is then either reversed or degraded. According to a model, the HMCES DNA-protein cross-link. This chain is Abasic site processing protein HMCES, found in Xenopus laevis (African clawed frog).